Consider the following 319-residue polypeptide: Insulin gene enhancer protein ISL-2 (319 aa).

LIM zinc-binding domains follow at residues 1–43 and 52–106; these read FLLR…CKRD and CAQC…RADH. 3 disordered regions span residues 106–151, 218–237, and 286–319; these read HGPP…EKTT, QQHSDKTSLQGLTGTPLVAG, and ESGSLGTSSGSDVTSLSSQLPDTPNSMVPSPAET. The homeobox DNA-binding region spans 150-209; that stretch reads TTRVRTVLNEKQLHTLRTCYAANPRPDALMKEQLVEMTGLSPRVIRVWFQNKRCKDKKKS. Over residues 218–230 the composition is skewed to polar residues; that stretch reads QQHSDKTSLQGLT. Residues 286–303 show a composition bias toward low complexity; sequence ESGSLGTSSGSDVTSLSS. Over residues 304–319 the composition is skewed to polar residues; that stretch reads QLPDTPNSMVPSPAET.

It is found in the nucleus. Functionally, transcriptional factor that defines subclasses of motoneurons that segregate into columns in the spinal cord and select distinct axon pathways. Acts in conjunction with LIM-1, LIM-3 and ISL-1. In Gallus gallus (Chicken), this protein is Insulin gene enhancer protein ISL-2 (ISL2).